Here is a 502-residue protein sequence, read N- to C-terminus: ATP synthase subunit alpha (502 aa).

Residue Gly-169–Thr-176 coordinates ATP.

Belongs to the ATPase alpha/beta chains family. In terms of assembly, F-type ATPases have 2 components, CF(1) - the catalytic core - and CF(0) - the membrane proton channel. CF(1) has five subunits: alpha(3), beta(3), gamma(1), delta(1), epsilon(1). CF(0) has three main subunits: a(1), b(2) and c(9-12). The alpha and beta chains form an alternating ring which encloses part of the gamma chain. CF(1) is attached to CF(0) by a central stalk formed by the gamma and epsilon chains, while a peripheral stalk is formed by the delta and b chains.

It localises to the cell inner membrane. It carries out the reaction ATP + H2O + 4 H(+)(in) = ADP + phosphate + 5 H(+)(out). In terms of biological role, produces ATP from ADP in the presence of a proton gradient across the membrane. The alpha chain is a regulatory subunit. In Oleidesulfovibrio alaskensis (strain ATCC BAA-1058 / DSM 17464 / G20) (Desulfovibrio alaskensis), this protein is ATP synthase subunit alpha.